The chain runs to 345 residues: Phosphoribosylformylglycinamidine cyclo-ligase (345 aa).

Belongs to the AIR synthase family.

It localises to the cytoplasm. It catalyses the reaction 2-formamido-N(1)-(5-O-phospho-beta-D-ribosyl)acetamidine + ATP = 5-amino-1-(5-phospho-beta-D-ribosyl)imidazole + ADP + phosphate + H(+). It participates in purine metabolism; IMP biosynthesis via de novo pathway; 5-amino-1-(5-phospho-D-ribosyl)imidazole from N(2)-formyl-N(1)-(5-phospho-D-ribosyl)glycinamide: step 2/2. The sequence is that of Phosphoribosylformylglycinamidine cyclo-ligase from Myxococcus xanthus (strain DK1622).